Here is a 202-residue protein sequence, read N- to C-terminus: Imidazoleglycerol-phosphate dehydratase (202 aa).

The protein belongs to the imidazoleglycerol-phosphate dehydratase family.

Its subcellular location is the cytoplasm. It carries out the reaction D-erythro-1-(imidazol-4-yl)glycerol 3-phosphate = 3-(imidazol-4-yl)-2-oxopropyl phosphate + H2O. It participates in amino-acid biosynthesis; L-histidine biosynthesis; L-histidine from 5-phospho-alpha-D-ribose 1-diphosphate: step 6/9. The chain is Imidazoleglycerol-phosphate dehydratase from Rhizobium etli (strain ATCC 51251 / DSM 11541 / JCM 21823 / NBRC 15573 / CFN 42).